We begin with the raw amino-acid sequence, 107 residues long: Sperm-specific class P protein 34 (107 aa).

The segment at 1 to 26 (MINVDPPTGNYPATGGNSTHNITSES) is disordered. The region spanning 1-107 (MINVDPPTGN…GEIIVKLIAA (107 aa)) is the MSP domain. Over residues 15-25 (GGNSTHNITSE) the composition is skewed to polar residues.

In terms of tissue distribution, expressed at higher level in testis.

This chain is Sperm-specific class P protein 34 (ssp-34), found in Caenorhabditis elegans.